The following is a 164-amino-acid chain: Transcription elongation factor GreA (164 aa).

Positions 50–76 (YHAAREEQGQQEARIRQLQDLLSNAKV) form a coiled coil.

The protein belongs to the GreA/GreB family.

In terms of biological role, necessary for efficient RNA polymerase transcription elongation past template-encoded arresting sites. The arresting sites in DNA have the property of trapping a certain fraction of elongating RNA polymerases that pass through, resulting in locked ternary complexes. Cleavage of the nascent transcript by cleavage factors such as GreA or GreB allows the resumption of elongation from the new 3'terminus. GreA releases sequences of 2 to 3 nucleotides. The chain is Transcription elongation factor GreA from Mycobacterium bovis (strain ATCC BAA-935 / AF2122/97).